Reading from the N-terminus, the 436-residue chain is Glutamyl-tRNA reductase (436 aa).

Residues 49–52 (TCNR), Ser109, 114–116 (EGQ), and Gln120 each bind substrate. Cys50 functions as the Nucleophile in the catalytic mechanism. NADP(+) is bound at residue 198-203 (GAGRMS).

This sequence belongs to the glutamyl-tRNA reductase family. In terms of assembly, homodimer.

It carries out the reaction (S)-4-amino-5-oxopentanoate + tRNA(Glu) + NADP(+) = L-glutamyl-tRNA(Glu) + NADPH + H(+). It functions in the pathway porphyrin-containing compound metabolism; protoporphyrin-IX biosynthesis; 5-aminolevulinate from L-glutamyl-tRNA(Glu): step 1/2. The protein operates within porphyrin-containing compound metabolism; chlorophyll biosynthesis. Catalyzes the NADPH-dependent reduction of glutamyl-tRNA(Glu) to glutamate 1-semialdehyde (GSA). This is Glutamyl-tRNA reductase from Prochlorococcus marinus (strain MIT 9215).